The chain runs to 141 residues: Nucleoside diphosphate kinase (141 aa).

The ATP site is built by Lys11, Phe59, Arg87, Thr93, Arg104, and Asn114. Catalysis depends on His117, which acts as the Pros-phosphohistidine intermediate.

Belongs to the NDK family. As to quaternary structure, homotetramer. Mg(2+) is required as a cofactor.

It is found in the cytoplasm. The catalysed reaction is a 2'-deoxyribonucleoside 5'-diphosphate + ATP = a 2'-deoxyribonucleoside 5'-triphosphate + ADP. It carries out the reaction a ribonucleoside 5'-diphosphate + ATP = a ribonucleoside 5'-triphosphate + ADP. Its function is as follows. Major role in the synthesis of nucleoside triphosphates other than ATP. The ATP gamma phosphate is transferred to the NDP beta phosphate via a ping-pong mechanism, using a phosphorylated active-site intermediate. The chain is Nucleoside diphosphate kinase from Mannheimia succiniciproducens (strain KCTC 0769BP / MBEL55E).